The chain runs to 277 residues: 4-hydroxy-tetrahydrodipicolinate reductase (277 aa).

9 to 14 provides a ligand contact to NAD(+); it reads GATGRM. Lys-37 is a binding site for NADP(+). NAD(+) is bound at residue 75–77; that stretch reads GTS. The active-site Proton donor/acceptor is His-132. Residue Lys-136 is the Proton donor of the active site. (S)-2,3,4,5-tetrahydrodipicolinate is bound at residue 142–143; the sequence is GT. Disordered regions lie at residues 154 to 173 and 247 to 277; these read ARGA…ARGQ and ERAA…VTSA. The span at 250–265 shows a compositional bias: low complexity; that stretch reads AQAAAGDAPSGPVDDG.

This sequence belongs to the DapB family.

It is found in the cytoplasm. It catalyses the reaction (S)-2,3,4,5-tetrahydrodipicolinate + NAD(+) + H2O = (2S,4S)-4-hydroxy-2,3,4,5-tetrahydrodipicolinate + NADH + H(+). The catalysed reaction is (S)-2,3,4,5-tetrahydrodipicolinate + NADP(+) + H2O = (2S,4S)-4-hydroxy-2,3,4,5-tetrahydrodipicolinate + NADPH + H(+). It functions in the pathway amino-acid biosynthesis; L-lysine biosynthesis via DAP pathway; (S)-tetrahydrodipicolinate from L-aspartate: step 4/4. Functionally, catalyzes the conversion of 4-hydroxy-tetrahydrodipicolinate (HTPA) to tetrahydrodipicolinate. This is 4-hydroxy-tetrahydrodipicolinate reductase from Clavibacter michiganensis subsp. michiganensis (strain NCPPB 382).